Consider the following 171-residue polypeptide: uncharacterized protein (171 aa).

An N-terminal signal peptide occupies residues 1–24 (MIFDSLTMTQSSLSLLLLTGAIFS). Residues 25–70 (ISALYLTLFHRCATFSATSDLFLLVPLKFVSRDINDRLKTHYHHSC) lie on the Extracellular side of the membrane. The helical transmembrane segment at 71–91 (LGSPFLCIIFLFISPLLNYHF) threads the bilayer. At 92–140 (RSLVRPPKIHQKGSIPTLTKNAETRCSHHLKQAAATGEVCKVVVIIKGH) the chain is on the cytoplasmic side. The chain crosses the membrane as a helical span at residues 141 to 161 (ILKDCSIFFFIIFPLIYPLFI). Residues 162 to 171 (NCSSKYNGLQ) lie on the Extracellular side of the membrane.

It localises to the membrane. This is an uncharacterized protein from Saccharomyces cerevisiae (strain ATCC 204508 / S288c) (Baker's yeast).